Reading from the N-terminus, the 328-residue chain is Glycerol-3-phosphate dehydrogenase [NAD(P)+] (328 aa).

3 residues coordinate NADPH: Trp11, Arg30, and Lys103. Sn-glycerol 3-phosphate-binding residues include Lys103, Gly132, and Ser134. Residue Ala136 coordinates NADPH. 5 residues coordinate sn-glycerol 3-phosphate: Lys187, Asp240, Ser250, Arg251, and Asn252. Lys187 functions as the Proton acceptor in the catalytic mechanism. Residue Arg251 coordinates NADPH. Positions 275 and 277 each coordinate NADPH.

This sequence belongs to the NAD-dependent glycerol-3-phosphate dehydrogenase family.

The protein localises to the cytoplasm. It catalyses the reaction sn-glycerol 3-phosphate + NAD(+) = dihydroxyacetone phosphate + NADH + H(+). It carries out the reaction sn-glycerol 3-phosphate + NADP(+) = dihydroxyacetone phosphate + NADPH + H(+). It participates in membrane lipid metabolism; glycerophospholipid metabolism. Its function is as follows. Catalyzes the reduction of the glycolytic intermediate dihydroxyacetone phosphate (DHAP) to sn-glycerol 3-phosphate (G3P), the key precursor for phospholipid synthesis. This is Glycerol-3-phosphate dehydrogenase [NAD(P)+] from Thiobacillus denitrificans (strain ATCC 25259 / T1).